Here is a 589-residue protein sequence, read N- to C-terminus: 5'-AMP-activated protein kinase catalytic subunit alpha-1 (589 aa).

The 253-residue stretch at 24-276 (FVIKETIGKG…VKRIVNHSWF (253 aa)) folds into the Protein kinase domain. ATP-binding positions include 30–38 (IGKGAFGAV) and Lys53. Asp147 (proton acceptor) is an active-site residue.

The protein belongs to the protein kinase superfamily. CAMK Ser/Thr protein kinase family. SNF1 subfamily.

It carries out the reaction L-seryl-[protein] + ATP = O-phospho-L-seryl-[protein] + ADP + H(+). It catalyses the reaction L-threonyl-[protein] + ATP = O-phospho-L-threonyl-[protein] + ADP + H(+). Probably does not act as a sensor that couples lifespan to information about energy levels and insulin-like signals. Together with aak-2, involved in the establishment of germline stem cell (GSC) quiescence during dauer development. Plays a role in the maintenance of glycogen stores which are necessary for resistance to hyperosmotic stress. This is 5'-AMP-activated protein kinase catalytic subunit alpha-1 (aak-1) from Caenorhabditis elegans.